Consider the following 342-residue polypeptide: Anthranilate phosphoribosyltransferase (342 aa).

5-phospho-alpha-D-ribose 1-diphosphate contacts are provided by residues Gly79, 82 to 83 (GD), Thr87, 89 to 92 (NVST), 107 to 115 (KHGNRSVSS), and Ser119. Anthranilate is bound at residue Gly79. Ser91 provides a ligand contact to Mg(2+). Asn110 contacts anthranilate. Anthranilate is bound at residue Arg165. Mg(2+) is bound by residues Asp223 and Glu224.

The protein belongs to the anthranilate phosphoribosyltransferase family. In terms of assembly, homodimer. Mg(2+) serves as cofactor.

The enzyme catalyses N-(5-phospho-beta-D-ribosyl)anthranilate + diphosphate = 5-phospho-alpha-D-ribose 1-diphosphate + anthranilate. The protein operates within amino-acid biosynthesis; L-tryptophan biosynthesis; L-tryptophan from chorismate: step 2/5. In terms of biological role, catalyzes the transfer of the phosphoribosyl group of 5-phosphorylribose-1-pyrophosphate (PRPP) to anthranilate to yield N-(5'-phosphoribosyl)-anthranilate (PRA). This chain is Anthranilate phosphoribosyltransferase, found in Aeromonas hydrophila subsp. hydrophila (strain ATCC 7966 / DSM 30187 / BCRC 13018 / CCUG 14551 / JCM 1027 / KCTC 2358 / NCIMB 9240 / NCTC 8049).